The chain runs to 776 residues: Homoaconitase, mitochondrial (776 aa).

The transit peptide at 1–24 (MVALRRAVALNAVAIARLQTRALT) directs the protein to the mitochondrion. Residues Cys392, Cys459, and Cys462 each coordinate [4Fe-4S] cluster.

It belongs to the aconitase/IPM isomerase family. It depends on [4Fe-4S] cluster as a cofactor.

Its subcellular location is the mitochondrion. The catalysed reaction is (2R,3S)-homoisocitrate = cis-homoaconitate + H2O. It participates in amino-acid biosynthesis; L-lysine biosynthesis via AAA pathway; L-alpha-aminoadipate from 2-oxoglutarate: step 3/5. In terms of biological role, catalyzes the reversible hydration of cis-homoaconitate to (2R,3S)-homoisocitrate, a step in the alpha-aminoadipate pathway for lysine biosynthesis. The polypeptide is Homoaconitase, mitochondrial (LYS4) (Gibberella zeae (strain ATCC MYA-4620 / CBS 123657 / FGSC 9075 / NRRL 31084 / PH-1) (Wheat head blight fungus)).